A 163-amino-acid polypeptide reads, in one-letter code: Phosphopantetheine adenylyltransferase (163 aa).

T9 contributes to the substrate binding site. Residues 9–10 and H17 contribute to the ATP site; that span reads TF. K41, T73, and R87 together coordinate substrate. Residues 88 to 90, E98, and 123 to 129 each bind ATP; these read GLR and FSFISSS.

The protein belongs to the bacterial CoaD family. In terms of assembly, homohexamer. It depends on Mg(2+) as a cofactor.

The protein localises to the cytoplasm. It carries out the reaction (R)-4'-phosphopantetheine + ATP + H(+) = 3'-dephospho-CoA + diphosphate. Its pathway is cofactor biosynthesis; coenzyme A biosynthesis; CoA from (R)-pantothenate: step 4/5. Functionally, reversibly transfers an adenylyl group from ATP to 4'-phosphopantetheine, yielding dephospho-CoA (dPCoA) and pyrophosphate. This chain is Phosphopantetheine adenylyltransferase, found in Desulfitobacterium hafniense (strain Y51).